The following is a 5911-amino-acid chain: Nonribosomal peptide synthetase 30 (5911 aa).

The disordered stretch occupies residues 1–22; it reads MVPEKPTAQSKSGIGEPFRAGD. The interval 352-754 is adenylation 1; the sequence is ALIQPSSTAV…GRKDAQVKIR (403 aa). The Carrier 1 domain maps to 891 to 968; that stretch reads PRPFSVEYSL…EAAAIVARGT (78 aa). Ser928 carries the O-(pantetheine 4'-phosphoryl)serine modification. Residues 1007-1422 are condensation 1; sequence EDAFPCTPLQ…ERLIFVIDQL (416 aa). The adenylation 2 stretch occupies residues 1467 to 1865; sequence ERALSQPDRP…SLMFVGRKAD (399 aa). The region spanning 2001–2077 is the Carrier 2 domain; sequence QPTSELEAEM…NICSHSYYCS (77 aa). Ser2038 carries the post-translational modification O-(pantetheine 4'-phosphoryl)serine. Positions 2121–2538 are condensation 2; the sequence is QDAYPCTPLQ…GPDINMSDIG (418 aa). Residues 2568–2977 are adenylation 3; sequence EEQARLRPEA…GRKDSQVKIR (410 aa). A Carrier 3 domain is found at 3110–3186; that stretch reads QPSTNAQREL…LIADNSKSIK (77 aa). An O-(pantetheine 4'-phosphoryl)serine modification is found at Ser3147. The interval 3227 to 3652 is condensation 3; the sequence is VQDAYPCTPL…LELVIQAFMA (426 aa). The tract at residues 3701–4108 is adenylation 4; sequence EERVREQPNA…GRKDSQVKIR (408 aa). A Carrier 4 domain is found at 4248 to 4325; sequence PPTTPLECQM…DIIATMTKNK (78 aa). Residue Ser4285 is modified to O-(pantetheine 4'-phosphoryl)serine. Positions 4326–4347 are disordered; the sequence is ATGASRRLPRDDDEPIPHTKYA. The tract at residues 4353 to 4793 is condensation 4; the sequence is SYAQGRLWFL…SLPLLTEDGR (441 aa). The tract at residues 4819-5231 is adenylation 5; it reads FKEQVSRHPN…GRMDVQVKIR (413 aa). The 77-residue stretch at 5360–5436 folds into the Carrier 5 domain; sequence KPTTDMEVAL…ALARRQEEIV (77 aa). Ser5397 carries the post-translational modification O-(pantetheine 4'-phosphoryl)serine. A condensation 5 region spans residues 5474 to 5828; sequence VEDMLPLTSM…GIKMKLHFFT (355 aa).

It belongs to the NRP synthetase family.

It participates in secondary metabolite biosynthesis. Its function is as follows. Nonribosomal peptide synthetase; part of the gene cluster that mediates the biosynthesis of sansalvamide, a cyclic pentadepsipeptide that shows promising results as potential anti-cancer drug. The nonribosmal peptide synthetase NRPS30 produces sansalvamide by incorporating successively one phenylalanine, one leucine, one alpha-hydroxyisocaproic acid (HICA), one valine and one leucine before sansalvamide is released from by cyclization by the terminal C domain of NRPS30. The HICA residue is probably provided by reduction of alpha-ketoisocaproate by the cluster-specific aldo-keto reductase (NECHADRAFT_45914). This is Nonribosomal peptide synthetase 30 from Fusarium vanettenii (strain ATCC MYA-4622 / CBS 123669 / FGSC 9596 / NRRL 45880 / 77-13-4) (Fusarium solani subsp. pisi).